A 177-amino-acid chain; its full sequence is ATP-dependent protease subunit HslV (177 aa).

Residue threonine 7 is part of the active site. Positions 162, 165, and 168 each coordinate Na(+).

The protein belongs to the peptidase T1B family. HslV subfamily. As to quaternary structure, a double ring-shaped homohexamer of HslV is capped on each side by a ring-shaped HslU homohexamer. The assembly of the HslU/HslV complex is dependent on binding of ATP.

The protein localises to the cytoplasm. It carries out the reaction ATP-dependent cleavage of peptide bonds with broad specificity.. With respect to regulation, allosterically activated by HslU binding. Its function is as follows. Protease subunit of a proteasome-like degradation complex believed to be a general protein degrading machinery. This Leptospira biflexa serovar Patoc (strain Patoc 1 / Ames) protein is ATP-dependent protease subunit HslV.